The primary structure comprises 215 residues: MNYDIADLRRDYAGETLSVESAPASPLDLFQTWFAAAREHETQDANAMTLATVDSQGLPHARVVLLKQLDDKGLVFFTNYQSHKGSELTNVPYAALVFWWPTLQRQIRIEGRVEKASAEVSDAYFANRPRDSQLGAWISQQSVEIPDRDWLEERKQRFEQVYGEQTVERPPHWGGYRVLPFLLEFWQGQPNRLHDRIRYRYHEQDAAWSKTRLAP.

Substrate is bound by residues 9-12 (RRDY) and Lys-67. Residues 62-67 (RVVLLK), 77-78 (FT), Lys-84, and Gln-106 each bind FMN. Substrate-binding residues include Tyr-124, Arg-128, and Ser-132. Residues 141–142 (QS) and Trp-186 each bind FMN. Residue 192–194 (RLH) coordinates substrate. Residue Arg-196 participates in FMN binding.

It belongs to the pyridoxamine 5'-phosphate oxidase family. In terms of assembly, homodimer. FMN is required as a cofactor.

It carries out the reaction pyridoxamine 5'-phosphate + O2 + H2O = pyridoxal 5'-phosphate + H2O2 + NH4(+). It catalyses the reaction pyridoxine 5'-phosphate + O2 = pyridoxal 5'-phosphate + H2O2. The protein operates within cofactor metabolism; pyridoxal 5'-phosphate salvage; pyridoxal 5'-phosphate from pyridoxamine 5'-phosphate: step 1/1. It functions in the pathway cofactor metabolism; pyridoxal 5'-phosphate salvage; pyridoxal 5'-phosphate from pyridoxine 5'-phosphate: step 1/1. Catalyzes the oxidation of either pyridoxine 5'-phosphate (PNP) or pyridoxamine 5'-phosphate (PMP) into pyridoxal 5'-phosphate (PLP). This chain is Pyridoxine/pyridoxamine 5'-phosphate oxidase, found in Chromohalobacter salexigens (strain ATCC BAA-138 / DSM 3043 / CIP 106854 / NCIMB 13768 / 1H11).